The sequence spans 326 residues: Adenosine receptor A1 (326 aa).

The Extracellular portion of the chain corresponds to 1–10 (MPPSISAFQA). A helical membrane pass occupies residues 11–33 (AYIGIEVLIALVSVPGNVLVIWA). Residues 34-46 (VKVNQALRDATFC) lie on the Cytoplasmic side of the membrane. A helical membrane pass occupies residues 47–69 (FIVSLAVADVAVGALVIPLAILI). The Extracellular portion of the chain corresponds to 70–80 (NIGPQTYFHTC). A disulfide bridge links Cys80 with Cys169. Residues 81 to 102 (LMVACPVLILTQSSILALLAIA) traverse the membrane as a helical segment. The Cytoplasmic segment spans residues 103-123 (VDRYLRVKIPLRYKMVVTPRR). A helical membrane pass occupies residues 124 to 146 (AAVAIAGCWILSFVVGLTPMFGW). The Extracellular portion of the chain corresponds to 147–176 (NNLSAVERAWAANGSMGEPVIKCEFEKVIS). An N-linked (GlcNAc...) asparagine glycan is attached at Asn159. Residues 177–201 (MEYMVYFNFFVWVLPPLLLMVLIYL) traverse the membrane as a helical segment. Over 202 to 235 (EVFYLIRKQLNKKVSASSGDPQKYYGKELKIAKS) the chain is Cytoplasmic. Residues 236–259 (LALILFLFALSWLPLHILNCITLF) traverse the membrane as a helical segment. The Extracellular portion of the chain corresponds to 260-267 (CPSCHKPS). A helical membrane pass occupies residues 268-292 (ILTYIAIFLTHGNSAMNPIVYAFRI). At 293–326 (QKFRVTFLKIWNDHFRCQPAPPIDEDLPEERPDD) the chain is on the cytoplasmic side. A lipid anchor (S-palmitoyl cysteine) is attached at Cys309.

This sequence belongs to the G-protein coupled receptor 1 family.

Its subcellular location is the cell membrane. Its function is as follows. Receptor for adenosine. The activity of this receptor is mediated by G proteins which inhibit adenylyl cyclase. This is Adenosine receptor A1 (ADORA1) from Homo sapiens (Human).